The sequence spans 539 residues: Probable 1,4-beta-D-glucan cellobiohydrolase B (539 aa).

The first 26 residues, M1 to A26, serve as a signal peptide directing secretion. A catalytic region spans residues Q27–S461. Residue N90 is glycosylated (N-linked (GlcNAc...) asparagine). E238 (nucleophile) is an active-site residue. E243 (proton donor) is an active-site residue. N-linked (GlcNAc...) asparagine glycans are attached at residues N296 and N495. A thr-rich linker region spans residues T462 to G503. The segment covering T462–G503 has biased composition (low complexity). The interval T462–V504 is disordered. Positions G503–L539 constitute a CBM1 domain. 2 cysteine pairs are disulfide-bonded: C511–C528 and C522–C538.

This sequence belongs to the glycosyl hydrolase 7 (cellulase C) family.

The protein resides in the secreted. It catalyses the reaction Hydrolysis of (1-&gt;4)-beta-D-glucosidic linkages in cellulose and cellotetraose, releasing cellobiose from the non-reducing ends of the chains.. The biological conversion of cellulose to glucose generally requires three types of hydrolytic enzymes: (1) Endoglucanases which cut internal beta-1,4-glucosidic bonds; (2) Exocellobiohydrolases that cut the disaccharide cellobiose from the non-reducing end of the cellulose polymer chain; (3) Beta-1,4-glucosidases which hydrolyze the cellobiose and other short cello-oligosaccharides to glucose. This chain is Probable 1,4-beta-D-glucan cellobiohydrolase B (cbhB), found in Aspergillus clavatus (strain ATCC 1007 / CBS 513.65 / DSM 816 / NCTC 3887 / NRRL 1 / QM 1276 / 107).